The primary structure comprises 876 residues: Alanine--tRNA ligase (876 aa).

Residues H565, H569, C667, and H671 each coordinate Zn(2+).

The protein belongs to the class-II aminoacyl-tRNA synthetase family. Requires Zn(2+) as cofactor.

Its subcellular location is the cytoplasm. It catalyses the reaction tRNA(Ala) + L-alanine + ATP = L-alanyl-tRNA(Ala) + AMP + diphosphate. In terms of biological role, catalyzes the attachment of alanine to tRNA(Ala) in a two-step reaction: alanine is first activated by ATP to form Ala-AMP and then transferred to the acceptor end of tRNA(Ala). Also edits incorrectly charged Ser-tRNA(Ala) and Gly-tRNA(Ala) via its editing domain. The polypeptide is Alanine--tRNA ligase (Staphylococcus saprophyticus subsp. saprophyticus (strain ATCC 15305 / DSM 20229 / NCIMB 8711 / NCTC 7292 / S-41)).